The sequence spans 89 residues: Small ribosomal subunit protein uS15 (89 aa).

Belongs to the universal ribosomal protein uS15 family. Part of the 30S ribosomal subunit. Forms a bridge to the 50S subunit in the 70S ribosome, contacting the 23S rRNA.

Functionally, one of the primary rRNA binding proteins, it binds directly to 16S rRNA where it helps nucleate assembly of the platform of the 30S subunit by binding and bridging several RNA helices of the 16S rRNA. Forms an intersubunit bridge (bridge B4) with the 23S rRNA of the 50S subunit in the ribosome. This chain is Small ribosomal subunit protein uS15, found in Allorhizobium ampelinum (strain ATCC BAA-846 / DSM 112012 / S4) (Agrobacterium vitis (strain S4)).